The primary structure comprises 288 residues: MKDRTQELRTAKDSDDDDDVTVTVDRDRFMDEFFEQVEEIRGFIDKIAENVEEVKRKHSAILASPNPDEKTKEELEELMSDIKKTANKVRSKLKSIEQSIEQEEGLNRSSADLRIRKTQHSTLSRKFVEVMSEYNATQSDYRERCKGRIQRQLEITGRTTTSEELEDMLESGNPAIFASGIIMDSSISKQALSEIETRHSEIIKLENSIRELHDMFMDMAMLVESQGEMIDRIEYNVEHAVDYVERAVSDTKKAVKYQSKARRKKIMIIICCVILGIIIASTIGGIFG.

Residues 1–13 are compositionally biased toward basic and acidic residues; it reads MKDRTQELRTAKD. The segment at 1–20 is disordered; it reads MKDRTQELRTAKDSDDDDDV. The Cytoplasmic segment spans residues 1-265; that stretch reads MKDRTQELRT…KYQSKARRKK (265 aa). Residues serine 14, serine 64, and serine 95 each carry the phosphoserine modification. A coiled-coil region spans residues 68 to 109; sequence DEKTKEELEELMSDIKKTANKVRSKLKSIEQSIEQEEGLNRS. Position 188 is a phosphoserine; by DAPK1 (serine 188). One can recognise a t-SNARE coiled-coil homology domain in the interval 192 to 254; sequence LSEIETRHSE…ERAVSDTKKA (63 aa). Residues lysine 252, lysine 253, and lysine 256 each participate in a glycyl lysine isopeptide (Lys-Gly) (interchain with G-Cter in SUMO) cross-link. Residues 266–288 traverse the membrane as a helical; Anchor for type IV membrane protein segment; the sequence is IMIIICCVILGIIIASTIGGIFG.

The protein belongs to the syntaxin family. Part of the SNARE core complex containing SNAP25, VAMP2 and STX1A; this complex constitutes the basic catalytic machinery of the complex neurotransmitter release apparatus. The SNARE complex interacts with CPLX1. Interacts with STXBP1. The interaction with STXBP1 promotes assembly of the SNARE complex. Interacts (via C-terminus) with KCNB1 (via C-terminus); the interaction increases in a calcium-dependent manner and induces a pore-independent enhancement of exocytosis in neuroendocrine cells, chromaffin cells, pancreatic beta cells and from the soma of dorsal root ganglia (DRG) neurons. Interacts with SYTL4. Interacts with STXBP6. Interacts with PLCL1 (via C2 domain). Interacts with OTOF. Interacts with LGI3. Interacts (via the H3 domain) with SLC6A4 (via the N-terminus); this interaction regulates SLC4A6 channel conductance in thalamocortical neurons. Interacts with SYT6 and SYT8; the interaction is Ca(2+)-dependent. Interacts with VAMP8. Interacts with SNAP23. Interacts with VAPA and SYBU. Interacts with PRRT2. Interacts with SEPT8. Interacts with STXBP5L. Interacts with synaptotagmin-1/SYT1. Interacts with SEPTIN5; in the cerebellar cortex. Interacts with SEPTIN4; in the striatum. In terms of processing, phosphorylated by CK2. Phosphorylation at Ser-188 by DAPK1 significantly decreases its interaction with STXBP1. Post-translationally, (Microbial infection) Targeted and hydrolyzed by C.botulinum neurotoxin type C (BoNT/C), which hydrolyzes the 253-Lys-|-Ala-254 bond. Cleavage inhibits neurotransmitter release. Phosphorylated by CK2. Phosphorylation at Ser-188 by DAPK1 significantly decreases its interaction with STXBP1. In terms of processing, sumoylated, sumoylation is required for regulation of synaptic vesicle endocytosis. In terms of tissue distribution, expressed predominantly in cerebral cortex, hippocampus, cerebellum, adrenal medulla and retina with weak expression detected in non-neuronal tissues.

The protein localises to the cytoplasmic vesicle. The protein resides in the secretory vesicle. Its subcellular location is the synaptic vesicle membrane. It is found in the cell membrane. It localises to the synapse. The protein localises to the synaptosome. Plays an essential role in hormone and neurotransmitter calcium-dependent exocytosis and endocytosis. Part of the SNARE (Soluble NSF Attachment Receptor) complex composed of SNAP25, STX1A and VAMP2 which mediates the fusion of synaptic vesicles with the presynaptic plasma membrane. STX1A and SNAP25 are localized on the plasma membrane while VAMP2 resides in synaptic vesicles. The pairing of the three SNAREs from the N-terminal SNARE motifs to the C-terminal anchors leads to the formation of the SNARE complex, which brings membranes into close proximity and results in final fusion. Participates in the calcium-dependent regulation of acrosomal exocytosis in sperm. Also plays an important role in the exocytosis of hormones such as insulin or glucagon-like peptide 1 (GLP-1). This is Syntaxin-1A (Stx1a) from Rattus norvegicus (Rat).